A 762-amino-acid chain; its full sequence is 5-methyltetrahydropteroyltriglutamate--homocysteine methyltransferase (762 aa).

Residues R16–K19 and K117 each bind 5-methyltetrahydropteroyltri-L-glutamate. L-homocysteine-binding positions include I438–S440 and E491. Residues I438–S440 and E491 contribute to the L-methionine site. 5-methyltetrahydropteroyltri-L-glutamate contacts are provided by residues R522–C523 and W568. Residue D606 coordinates L-homocysteine. An L-methionine-binding site is contributed by D606. E612 is a binding site for 5-methyltetrahydropteroyltri-L-glutamate. H648, C650, and E672 together coordinate Zn(2+). The active-site Proton donor is H701. C733 is a Zn(2+) binding site.

The protein belongs to the vitamin-B12 independent methionine synthase family. The cofactor is Zn(2+).

The catalysed reaction is 5-methyltetrahydropteroyltri-L-glutamate + L-homocysteine = tetrahydropteroyltri-L-glutamate + L-methionine. It functions in the pathway amino-acid biosynthesis; L-methionine biosynthesis via de novo pathway; L-methionine from L-homocysteine (MetE route): step 1/1. Functionally, catalyzes the transfer of a methyl group from 5-methyltetrahydrofolate to homocysteine resulting in methionine formation. The polypeptide is 5-methyltetrahydropteroyltriglutamate--homocysteine methyltransferase (Pseudomonas fluorescens (strain ATCC BAA-477 / NRRL B-23932 / Pf-5)).